Reading from the N-terminus, the 407-residue chain is Imidazolonepropionase (407 aa).

Positions 74 and 76 each coordinate Fe(3+). Positions 74 and 76 each coordinate Zn(2+). R83, Y146, and H179 together coordinate 4-imidazolone-5-propanoate. Y146 contacts N-formimidoyl-L-glutamate. H244 provides a ligand contact to Fe(3+). H244 is a Zn(2+) binding site. Q247 lines the 4-imidazolone-5-propanoate pocket. Fe(3+) is bound at residue D319. Residue D319 coordinates Zn(2+). 2 residues coordinate N-formimidoyl-L-glutamate: N321 and G323. T324 is a binding site for 4-imidazolone-5-propanoate.

The protein belongs to the metallo-dependent hydrolases superfamily. HutI family. Zn(2+) is required as a cofactor. It depends on Fe(3+) as a cofactor.

Its subcellular location is the cytoplasm. The catalysed reaction is 4-imidazolone-5-propanoate + H2O = N-formimidoyl-L-glutamate. The protein operates within amino-acid degradation; L-histidine degradation into L-glutamate; N-formimidoyl-L-glutamate from L-histidine: step 3/3. Functionally, catalyzes the hydrolytic cleavage of the carbon-nitrogen bond in imidazolone-5-propanoate to yield N-formimidoyl-L-glutamate. It is the third step in the universal histidine degradation pathway. This is Imidazolonepropionase from Salmonella heidelberg (strain SL476).